Here is a 208-residue protein sequence, read N- to C-terminus: Probable nicotinate-nucleotide adenylyltransferase (208 aa).

It belongs to the NadD family.

The enzyme catalyses nicotinate beta-D-ribonucleotide + ATP + H(+) = deamido-NAD(+) + diphosphate. Its pathway is cofactor biosynthesis; NAD(+) biosynthesis; deamido-NAD(+) from nicotinate D-ribonucleotide: step 1/1. Catalyzes the reversible adenylation of nicotinate mononucleotide (NaMN) to nicotinic acid adenine dinucleotide (NaAD). In Kineococcus radiotolerans (strain ATCC BAA-149 / DSM 14245 / SRS30216), this protein is Probable nicotinate-nucleotide adenylyltransferase.